Reading from the N-terminus, the 386-residue chain is Enamidase (386 aa).

Zn(2+) contacts are provided by His-67, His-69, and Glu-164. Fe cation is bound by residues Glu-164, His-193, and His-220. Asp-276 is a Zn(2+) binding site.

As to quaternary structure, homotetramer. Dimer of dimers. It depends on Fe cation as a cofactor. Requires Zn(2+) as cofactor.

The enzyme catalyses 1,4,5,6-tetrahydro-6-oxonicotinate + 2 H2O = 2-formylglutarate + NH4(+). The protein operates within cofactor degradation; nicotinate degradation; propanoate and pyruvate from 6-hydroxynicotinate: step 2/8. Its function is as follows. Decyclization of 6-oxo-1,4,5,6-tetrahydronicotinate to form 2-(enamine)glutarate, followed by hydrolysis to form (S)-2-formylglutarate. The polypeptide is Enamidase (Eubacterium barkeri (Clostridium barkeri)).